Here is a 503-residue protein sequence, read N- to C-terminus: Probable cytosol aminopeptidase (503 aa).

K270 and D275 together coordinate Mn(2+). The active site involves K282. The Mn(2+) site is built by D293, D352, and E354. R356 is an active-site residue.

Belongs to the peptidase M17 family. Mn(2+) serves as cofactor.

It is found in the cytoplasm. It catalyses the reaction Release of an N-terminal amino acid, Xaa-|-Yaa-, in which Xaa is preferably Leu, but may be other amino acids including Pro although not Arg or Lys, and Yaa may be Pro. Amino acid amides and methyl esters are also readily hydrolyzed, but rates on arylamides are exceedingly low.. The enzyme catalyses Release of an N-terminal amino acid, preferentially leucine, but not glutamic or aspartic acids.. Its function is as follows. Presumably involved in the processing and regular turnover of intracellular proteins. Catalyzes the removal of unsubstituted N-terminal amino acids from various peptides. The sequence is that of Probable cytosol aminopeptidase from Shigella boydii serotype 18 (strain CDC 3083-94 / BS512).